Reading from the N-terminus, the 529-residue chain is Bifunctional purine biosynthesis protein PurH (529 aa).

In terms of domain architecture, MGS-like spans 2 to 149 (TNLVPVGRAL…KNHRFVNVVT (148 aa)).

The protein belongs to the PurH family.

It catalyses the reaction (6R)-10-formyltetrahydrofolate + 5-amino-1-(5-phospho-beta-D-ribosyl)imidazole-4-carboxamide = 5-formamido-1-(5-phospho-D-ribosyl)imidazole-4-carboxamide + (6S)-5,6,7,8-tetrahydrofolate. The catalysed reaction is IMP + H2O = 5-formamido-1-(5-phospho-D-ribosyl)imidazole-4-carboxamide. Its pathway is purine metabolism; IMP biosynthesis via de novo pathway; 5-formamido-1-(5-phospho-D-ribosyl)imidazole-4-carboxamide from 5-amino-1-(5-phospho-D-ribosyl)imidazole-4-carboxamide (10-formyl THF route): step 1/1. It participates in purine metabolism; IMP biosynthesis via de novo pathway; IMP from 5-formamido-1-(5-phospho-D-ribosyl)imidazole-4-carboxamide: step 1/1. This chain is Bifunctional purine biosynthesis protein PurH, found in Cereibacter sphaeroides (strain ATCC 17025 / ATH 2.4.3) (Rhodobacter sphaeroides).